We begin with the raw amino-acid sequence, 493 residues long: Ribonuclease Y (493 aa).

Residues I19 to A39 traverse the membrane as a helical segment. A KH domain is found at S172–D241. Residues V300–G392 form the HD domain.

The protein belongs to the RNase Y family.

Its subcellular location is the cell membrane. Endoribonuclease that initiates mRNA decay. The chain is Ribonuclease Y from Mycoplasma pneumoniae (strain ATCC 29342 / M129 / Subtype 1) (Mycoplasmoides pneumoniae).